A 160-amino-acid chain; its full sequence is Transcriptional repressor NrdR (160 aa).

Residues 1–11 (MRCPSCNSLDT) are compositionally biased toward polar residues. The disordered stretch occupies residues 1–20 (MRCPSCNSLDTQVKDSRPTE). Residues 3–34 (CPSCNSLDTQVKDSRPTEDSAVIRRRRVCMAC) fold into a zinc finger. Residues 49 to 139 (LTVIKRNGRR…VYRNFREAKD (91 aa)) form the ATP-cone domain.

Belongs to the NrdR family. Requires Zn(2+) as cofactor.

Functionally, negatively regulates transcription of bacterial ribonucleotide reductase nrd genes and operons by binding to NrdR-boxes. The chain is Transcriptional repressor NrdR from Nitrobacter hamburgensis (strain DSM 10229 / NCIMB 13809 / X14).